We begin with the raw amino-acid sequence, 168 residues long: 3'-5' exoribonuclease MT2234.1 (168 aa).

Asp-6 is a binding site for Mg(2+). Residues Asp-6 to Phe-9 form an RNA binding region.

As to quaternary structure, homodimer. The cofactor is Mg(2+).

Its function is as follows. Exonuclease that cleaves single-stranded 3' overhangs of double-stranded RNA. The protein is 3'-5' exoribonuclease MT2234.1 of Mycobacterium tuberculosis (strain CDC 1551 / Oshkosh).